Consider the following 392-residue polypeptide: Ribosomal RNA large subunit methyltransferase G (392 aa).

It belongs to the methyltransferase superfamily. RlmG family.

It is found in the cytoplasm. It catalyses the reaction guanosine(1835) in 23S rRNA + S-adenosyl-L-methionine = N(2)-methylguanosine(1835) in 23S rRNA + S-adenosyl-L-homocysteine + H(+). Specifically methylates the guanine in position 1835 (m2G1835) of 23S rRNA. The sequence is that of Ribosomal RNA large subunit methyltransferase G from Shewanella frigidimarina (strain NCIMB 400).